A 216-amino-acid polypeptide reads, in one-letter code: Probable nicotinate-nucleotide adenylyltransferase (216 aa).

It belongs to the NadD family.

The catalysed reaction is nicotinate beta-D-ribonucleotide + ATP + H(+) = deamido-NAD(+) + diphosphate. It functions in the pathway cofactor biosynthesis; NAD(+) biosynthesis; deamido-NAD(+) from nicotinate D-ribonucleotide: step 1/1. Catalyzes the reversible adenylation of nicotinate mononucleotide (NaMN) to nicotinic acid adenine dinucleotide (NaAD). In Geotalea daltonii (strain DSM 22248 / JCM 15807 / FRC-32) (Geobacter daltonii), this protein is Probable nicotinate-nucleotide adenylyltransferase.